Reading from the N-terminus, the 493-residue chain is Keratin, type II cuticular Hb3 (493 aa).

The segment at M1–E111 is head. Positions E111 to L422 constitute an IF rod domain. The coil 1A stretch occupies residues K112 to Y146. The linker 1 stretch occupies residues Q147 to L156. Positions E157 to S257 are coil 1B. A Glycyl lysine isopeptide (Lys-Gly) (interchain with G-Cter in SUMO1) cross-link involves residue K217. The linker 12 stretch occupies residues H258 to L274. A coil 2 region spans residues N275–E418. The interval E419 to H493 is tail.

It belongs to the intermediate filament family. In terms of assembly, heterotetramer of two type I and two type II keratins. As to expression, synthesis begins in the cortex 10-15 cell layers above the apex of the dermal papilla and ends abruptly in the middle of the cortex.

The polypeptide is Keratin, type II cuticular Hb3 (KRT83) (Homo sapiens (Human)).